The following is a 1083-amino-acid chain: Neisserial autotransporter lipoprotein NalP (1083 aa).

Residues 1–27 (MRTTPTFPTKTFKPTAMALAVATTLSA) form the signal peptide. A lipid anchor (N-palmitoyl cysteine) is attached at C28. C28 carries the S-diacylglycerol cysteine lipid modification. Residues 111–483 (NDAYKNLINL…WGLLDAGKAM (373 aa)) enclose the Peptidase S8 domain. Residues D139, H211, and S427 each act as charge relay system in the active site. In terms of domain architecture, Autotransporter spans 809–1083 (DGLDHNGTGL…SGRVGVGYRF (275 aa)). Transmembrane regions (beta stranded) follow at residues 819–828 (RVIAQTQQDG), 844–852 (TQTVGIAAK), 858–866 (TAAATLGMG), 883–891 (SLFAGIRHD), 897–906 (YLKGLFSYGR), 931–941 (QLGALGGVNVP), 948–958 (LTVEGGLRYDL), 984–994 (VGLAGLKLSQP), 1000–1010 (VLFATAGVERD), 1041–1052 (RLVAGLGADVEF), 1057–1066 (NGLARYSYAG), and 1074–1083 (SGRVGVGYRF).

The protein belongs to the peptidase S8 family. In terms of processing, a fusion protein of the first 44 residues with beta-lactamase is lipidated in E.coli, strongly suggesting this is a lipoprotein in situ. The lipidated form is briefly retained on the cell surface which allows it to process its endogenous substrates on the cell surface before the passenger domain is released into the medium.

The protein resides in the cell outer membrane. The protein localises to the cell surface. Its subcellular location is the secreted. Its function is as follows. Major human immunogenic protein. Autotransporter with a secreted protease domain involved in processing other autotransporter proteins including App and IgA. Probably autoprocesses to release the about 70 kDa passenger domain. Processes the lactoferrin receptor lipoprotein subunit (LbpB) extracellularly, releasing it from the cell surface. LbpB release protects bacteria against complement-mediated killing by anti-LbpB antibodies. Processes NHBA. Lipidation slows its auto-processing, probably allowing it to act on endogenous substrates on the cell surface before the passenger domain is released into the medium. The C-terminal beta-barrel domain inserts into the outer membrane where it probably exports the N-terminal passenger domain. Both the cell surface protein (Neisserial autotransporter lipoprotein NalP) and the passenger domain cleave human (host) complement factor C3, generating a shorter alpha chain and a longer beta chain than normal. Functionally, plays a role in extracellular-DNA (eDNA) mediated biofilm formation. In some strains (including cc32 strain H44/76 but not cc11 strain B16B6) eDNA stimulates biofilm formation. When NalP is not expressed (and no longer processes NHBA or IgA) biofilm formation increases. This is probably because the number of positively charged, DNA-binding peptides on the cell surface rises, resulting in increased biofilm formation. In terms of biological role, cleaves human (host) complement factor C3, generating a shorter alpha chain and a longer beta chain than normal. Does not act on mouse or rabbit C3. Cleavage causes C3b degradation by human CFI and CFH, decreases deposition of C3b on the bacteria surface and probably facilitates complement escape. This chain is Neisserial autotransporter lipoprotein NalP, found in Neisseria meningitidis serogroup B / serotype 15 (strain H44/76).